The chain runs to 150 residues: Deoxyuridine 5'-triphosphate nucleotidohydrolase (150 aa).

Residues Arg69–Gly71, Asn82, and Leu86–Asp88 each bind substrate.

It belongs to the dUTPase family. Mg(2+) is required as a cofactor.

It catalyses the reaction dUTP + H2O = dUMP + diphosphate + H(+). It participates in pyrimidine metabolism; dUMP biosynthesis; dUMP from dCTP (dUTP route): step 2/2. This enzyme is involved in nucleotide metabolism: it produces dUMP, the immediate precursor of thymidine nucleotides and it decreases the intracellular concentration of dUTP so that uracil cannot be incorporated into DNA. The protein is Deoxyuridine 5'-triphosphate nucleotidohydrolase of Chromobacterium violaceum (strain ATCC 12472 / DSM 30191 / JCM 1249 / CCUG 213 / NBRC 12614 / NCIMB 9131 / NCTC 9757 / MK).